The chain runs to 341 residues: GTP-binding protein GTR2 (341 aa).

5 residues coordinate GTP: Ser23, Ser24, Ser43, His124, and Asp127.

It belongs to the GTR/RAG GTP-binding protein family. As to quaternary structure, heterodimer; with GTR1. Component of the GSE complex composed of GTR1, GTR2, SLM4, MEH1 and LTV1. Component of the EGO complex, at least composed of GTR2, SLM4 and MEH1. Interacts with GTR1; the interaction is direct.

It is found in the vacuole membrane. It catalyses the reaction GTP + H2O = GDP + phosphate + H(+). In terms of biological role, GTPase involved in activation of the TORC1 signaling pathway, which promotes growth and represses autophagy in nutrient-rich conditions. Also required for TORC1 inactivation during nitrogen starvation. Required for intracellular sorting of GAP1 out of the endosome. Involved in the regulation of microautophagy. The protein is GTP-binding protein GTR2 of Saccharomyces cerevisiae (strain ATCC 204508 / S288c) (Baker's yeast).